The chain runs to 483 residues: Glutamate--tRNA ligase (483 aa).

Residues 11–21 (PSPTGHLHIGN) carry the 'HIGH' region motif. Residues 252–256 (KLSKR) carry the 'KMSKS' region motif. Residue K255 coordinates ATP.

The protein belongs to the class-I aminoacyl-tRNA synthetase family. Glutamate--tRNA ligase type 1 subfamily. As to quaternary structure, monomer.

The protein resides in the cytoplasm. The enzyme catalyses tRNA(Glu) + L-glutamate + ATP = L-glutamyl-tRNA(Glu) + AMP + diphosphate. Functionally, catalyzes the attachment of glutamate to tRNA(Glu) in a two-step reaction: glutamate is first activated by ATP to form Glu-AMP and then transferred to the acceptor end of tRNA(Glu). This is Glutamate--tRNA ligase from Bacillus velezensis (strain DSM 23117 / BGSC 10A6 / LMG 26770 / FZB42) (Bacillus amyloliquefaciens subsp. plantarum).